The primary structure comprises 165 residues: Large ribosomal subunit protein uL11 (165 aa).

Residue Ser-38 is modified to Phosphoserine. A Glycyl lysine isopeptide (Lys-Gly) (interchain with G-Cter in SUMO2) cross-link involves residue Lys-40. A Glycyl lysine isopeptide (Lys-Gly) (interchain with G-Cter in ubiquitin) cross-link involves residue Lys-48. Residue Lys-54 is modified to N6-acetyllysine. Lys-83 is covalently cross-linked (Glycyl lysine isopeptide (Lys-Gly) (interchain with G-Cter in ubiquitin)). Residue Ser-165 is modified to Phosphoserine.

It belongs to the universal ribosomal protein uL11 family. Component of the large ribosomal subunit. Mature ribosomes consist of a small (40S) and a large (60S) subunit. The 40S subunit contains about 33 different proteins and 1 molecule of RNA (18S). The 60S subunit contains about 49 different proteins and 3 molecules of RNA (28S, 5.8S and 5S). In terms of processing, ubiquitinated at Lys-48 and Lys-83 by RNF14 and RNF25 in response to ribosome collisions (ribosome stalling).

It localises to the cytoplasm. Its function is as follows. Component of the large ribosomal subunit. The ribosome is a large ribonucleoprotein complex responsible for the synthesis of proteins in the cell. Binds directly to 26S ribosomal RNA. This chain is Large ribosomal subunit protein uL11 (RPL12), found in Chinchilla lanigera (Long-tailed chinchilla).